A 207-amino-acid chain; its full sequence is ATP-dependent Clp protease proteolytic subunit (207 aa).

Ser111 functions as the Nucleophile in the catalytic mechanism. The active site involves His136.

Belongs to the peptidase S14 family. Fourteen ClpP subunits assemble into 2 heptameric rings which stack back to back to give a disk-like structure with a central cavity, resembling the structure of eukaryotic proteasomes.

Its subcellular location is the cytoplasm. It catalyses the reaction Hydrolysis of proteins to small peptides in the presence of ATP and magnesium. alpha-casein is the usual test substrate. In the absence of ATP, only oligopeptides shorter than five residues are hydrolyzed (such as succinyl-Leu-Tyr-|-NHMec, and Leu-Tyr-Leu-|-Tyr-Trp, in which cleavage of the -Tyr-|-Leu- and -Tyr-|-Trp bonds also occurs).. In terms of biological role, cleaves peptides in various proteins in a process that requires ATP hydrolysis. Has a chymotrypsin-like activity. Plays a major role in the degradation of misfolded proteins. The protein is ATP-dependent Clp protease proteolytic subunit of Yersinia enterocolitica serotype O:8 / biotype 1B (strain NCTC 13174 / 8081).